Reading from the N-terminus, the 149-residue chain is Calmodulin (149 aa).

EF-hand domains are found at residues 8 to 43 (QQIA…LGQN), 44 to 79 (PSES…KMKD), 81 to 116 (DSEA…IGEK), and 117 to 149 (LSDA…LAAK). 20 residues coordinate Ca(2+): aspartate 21, aspartate 23, aspartate 25, lysine 27, glutamate 32, aspartate 57, asparagine 59, aspartate 61, serine 63, glutamate 68, aspartate 94, asparagine 96, aspartate 98, lysine 100, glutamate 105, aspartate 130, asparagine 132, aspartate 134, glutamate 136, and glutamate 141.

Belongs to the calmodulin family.

Calmodulin mediates the control of a large number of enzymes, ion channels and other proteins by Ca(2+). Among the enzymes to be stimulated by the calmodulin-Ca(2+) complex are a number of protein kinases and phosphatases. The chain is Calmodulin (CMD1) from Candida albicans (Yeast).